A 382-amino-acid chain; its full sequence is Glutaminyl-peptide cyclotransferase-like protein (382 aa).

The chain crosses the membrane as a helical span at residues 35 to 55 (LLPLLLALAVGSAFYTIWSGW). Cysteine 167 and cysteine 191 are disulfide-bonded. Aspartate 186 lines the Zn(2+) pocket. The Proton acceptor role is filled by glutamate 225. Glutamate 226 contacts Zn(2+). Catalysis depends on aspartate 269, which acts as the Proton acceptor. Zn(2+) is bound at residue histidine 351.

Belongs to the glutaminyl-peptide cyclotransferase family.

Its subcellular location is the golgi apparatus membrane. The enzyme catalyses N-terminal L-glutaminyl-[peptide] = N-terminal 5-oxo-L-prolyl-[peptide] + NH4(+). Its function is as follows. Responsible for the biosynthesis of pyroglutamyl peptides. The protein is Glutaminyl-peptide cyclotransferase-like protein (QPCTL) of Homo sapiens (Human).